We begin with the raw amino-acid sequence, 211 residues long: Uracil phosphoribosyltransferase (211 aa).

5-phospho-alpha-D-ribose 1-diphosphate is bound by residues R77, R102, and D129 to S137. Uracil-binding positions include I192 and G197–A199. D198 contacts 5-phospho-alpha-D-ribose 1-diphosphate.

This sequence belongs to the UPRTase family. Mg(2+) serves as cofactor.

The enzyme catalyses UMP + diphosphate = 5-phospho-alpha-D-ribose 1-diphosphate + uracil. It participates in pyrimidine metabolism; UMP biosynthesis via salvage pathway; UMP from uracil: step 1/1. With respect to regulation, allosterically activated by GTP. Functionally, catalyzes the conversion of uracil and 5-phospho-alpha-D-ribose 1-diphosphate (PRPP) to UMP and diphosphate. This chain is Uracil phosphoribosyltransferase, found in Corynebacterium diphtheriae (strain ATCC 700971 / NCTC 13129 / Biotype gravis).